Consider the following 453-residue polypeptide: CAAX prenyl protease 1 (453 aa).

The Lumenal portion of the chain corresponds to 1–12; sequence MFDLKTILDHPN. Residues 13 to 33 form a helical membrane-spanning segment; sequence IPWKLIISGFSIAQFSFESYL. Residues 34-89 lie on the Cytoplasmic side of the membrane; sequence TYRQYQKLSETKLPPVLEDEIDDETFHKSRNYSRAKAKFSIFGDVYNLAQKLVFIK. Residues 90-110 form a helical membrane-spanning segment; the sequence is YDLFPKIWHMAVSLLNAVLPV. Topologically, residues 111–121 are lumenal; it reads RFHMVSTVAQS. The chain crosses the membrane as a helical span at residues 122 to 142; that stretch reads LCFLGLLSSLSTLVDLPLSYY. Topologically, residues 143–167 are cytoplasmic; that stretch reads SHFVLEEKFGFNKLTVQLWITDMIK. A helical transmembrane segment spans residues 168–188; sequence SLTLAYAIGGPILYLFLKIFD. Residues 189–197 are Lumenal-facing; that stretch reads KFPTDFLWY. The helical transmembrane segment at 198–218 threads the bilayer; that stretch reads IMVFLFVVQILAMTIIPVFIM. Over 219-306 the chain is Cytoplasmic; sequence PMFNKFTPLE…HEIGHWQKNH (88 aa). H297 serves as a coordination point for Zn(2+). E298 is an active-site residue. Residue H301 participates in Zn(2+) binding. Residues 307–327 traverse the membrane as a helical segment; it reads IVNMVIFSQLHTFLIFSLFTS. Residues 328–357 lie on the Lumenal side of the membrane; that stretch reads IYRNTSFYNTFGFFLEKSTGSFVDPVITKE. A helical membrane pass occupies residues 358 to 378; it reads FPIIIGFMLFNDLLTPLECAM. The Cytoplasmic portion of the chain corresponds to 379–453; sequence QFVMSLISRT…LDYVSEKKKN (75 aa). E390 serves as a coordination point for Zn(2+). The active-site Proton donor is D394.

This sequence belongs to the peptidase M48A family. Zn(2+) is required as a cofactor.

The protein resides in the endoplasmic reticulum membrane. It catalyses the reaction Hydrolyzes the peptide bond -P2-(S-farnesyl or geranylgeranyl)C-P1'-P2'-P3'-COOH where P1' and P2' are amino acids with aliphatic side chains and P3' is any C-terminal residue.. In terms of biological role, proteolytically removes the C-terminal three residues of farnesylated A-factor mating pheromone. Also acts to cleave the N-terminal extension of the pheromone. Does not act on Ras. The protein is CAAX prenyl protease 1 (STE24) of Saccharomyces cerevisiae (strain ATCC 204508 / S288c) (Baker's yeast).